The chain runs to 334 residues: N-acetyl-gamma-glutamyl-phosphate reductase (334 aa).

The active site involves Cys154.

The protein belongs to the NAGSA dehydrogenase family. Type 1 subfamily.

The protein localises to the cytoplasm. It carries out the reaction N-acetyl-L-glutamate 5-semialdehyde + phosphate + NADP(+) = N-acetyl-L-glutamyl 5-phosphate + NADPH + H(+). It participates in amino-acid biosynthesis; L-arginine biosynthesis; N(2)-acetyl-L-ornithine from L-glutamate: step 3/4. Catalyzes the NADPH-dependent reduction of N-acetyl-5-glutamyl phosphate to yield N-acetyl-L-glutamate 5-semialdehyde. This Pectobacterium carotovorum subsp. carotovorum (strain PC1) protein is N-acetyl-gamma-glutamyl-phosphate reductase.